The chain runs to 355 residues: Probable protein phosphatase 2C 21 (355 aa).

One can recognise a PPM-type phosphatase domain in the interval Arg-23–Phe-329. 4 residues coordinate Mn(2+): Asp-57, Gly-58, Asp-272, and Asp-320. Positions Phe-329–Ser-355 are disordered.

This sequence belongs to the PP2C family. It depends on Mg(2+) as a cofactor. Requires Mn(2+) as cofactor.

It catalyses the reaction O-phospho-L-seryl-[protein] + H2O = L-seryl-[protein] + phosphate. The enzyme catalyses O-phospho-L-threonyl-[protein] + H2O = L-threonyl-[protein] + phosphate. The polypeptide is Probable protein phosphatase 2C 21 (PPC4-2) (Arabidopsis thaliana (Mouse-ear cress)).